The sequence spans 318 residues: CRISPR-associated endonuclease Cas1 1 (318 aa).

Residues E160, H225, and E240 each contribute to the Mn(2+) site.

This sequence belongs to the CRISPR-associated endonuclease Cas1 family. In terms of assembly, homodimer, forms a heterotetramer with a Cas2 homodimer. It depends on Mg(2+) as a cofactor. Mn(2+) is required as a cofactor.

Functionally, CRISPR (clustered regularly interspaced short palindromic repeat), is an adaptive immune system that provides protection against mobile genetic elements (viruses, transposable elements and conjugative plasmids). CRISPR clusters contain spacers, sequences complementary to antecedent mobile elements, and target invading nucleic acids. CRISPR clusters are transcribed and processed into CRISPR RNA (crRNA). Acts as a dsDNA endonuclease. Involved in the integration of spacer DNA into the CRISPR cassette. The chain is CRISPR-associated endonuclease Cas1 1 from Thermodesulfovibrio yellowstonii (strain ATCC 51303 / DSM 11347 / YP87).